We begin with the raw amino-acid sequence, 663 residues long: Shugoshin 1 (663 aa).

Coiled coils occupy residues 8 to 29 (KQAFQDSLEDIKERMKEKRIKK) and 110 to 132 (DTAESKLASLKDIIAKVTHNLLE). 3 disordered regions span residues 207-250 (RNTA…MNKN), 278-401 (EHTV…LNSG), and 417-478 (FRQN…ARKN). Basic and acidic residues-rich tracts occupy residues 231–242 (RLEECNNEDKTE), 280–304 (TVVETERPFPTEEFSNESRTDREID), 339–358 (KNKEEPRVGRERVKKGKAER), and 366–394 (KPWENSKPRARSKSRDRSASKKSVAKEKM). Low complexity predominate over residues 427–437 (NESSLEISSSE). The span at 443–453 (SLYKPYKDKSK) shows a compositional bias: basic and acidic residues.

It belongs to the shugoshin family. In terms of assembly, binds microtubules. Post-translationally, ubiquitinated by the anaphase promoting complex (APC) at the onset of anaphase, conducting to its degradation.

The protein localises to the nucleus. Its subcellular location is the chromosome. The protein resides in the centromere. It localises to the kinetochore. It is found in the nucleus speckle. Plays a central role in chromosome cohesion during mitosis by preventing premature dissociation of cohesin complex from centromeres after prophase, when most of cohesin complex dissociates from chromosomes arms. May act by preventing phosphorylation of the stag2 subunit of cohesin complex at the centromere, ensuring cohesin persistence at centromere until cohesin cleavage by espl1/separase at anaphase. May regulate kinetochore microtubule stability in mitosis, possibly to sense tension on mitotic chromosomes. The chain is Shugoshin 1 from Xenopus laevis (African clawed frog).